A 256-amino-acid polypeptide reads, in one-letter code: Triosephosphate isomerase (256 aa).

Residue 9–11 (NWK) participates in substrate binding. Residue His-97 is the Electrophile of the active site. The Proton acceptor role is filled by Glu-169. Substrate is bound by residues Gly-175, Ser-214, and 235-236 (GG).

The protein belongs to the triosephosphate isomerase family. As to quaternary structure, homodimer.

Its subcellular location is the cytoplasm. It carries out the reaction D-glyceraldehyde 3-phosphate = dihydroxyacetone phosphate. It functions in the pathway carbohydrate biosynthesis; gluconeogenesis. Its pathway is carbohydrate degradation; glycolysis; D-glyceraldehyde 3-phosphate from glycerone phosphate: step 1/1. In terms of biological role, involved in the gluconeogenesis. Catalyzes stereospecifically the conversion of dihydroxyacetone phosphate (DHAP) to D-glyceraldehyde-3-phosphate (G3P). This chain is Triosephosphate isomerase, found in Vibrio parahaemolyticus serotype O3:K6 (strain RIMD 2210633).